The sequence spans 724 residues: NAD(+) hydrolase SARM1 (724 aa).

The transit peptide at Met1–Arg27 directs the protein to the mitochondrion. The ARM 1 repeat unit spans residues Glu60–Glu100. NAD(+)-binding positions include Trp103, Arg110, Glu149 to Arg157, and His190 to Lys193. ARM repeat units lie at residues Gln114–Val153, Glu155–Lys193, Glu196–Leu235, Gly237–Asn280, Lys281–Asp314, Ala315–Ala354, and Gln359–Pro402. SAM domains are found at residues Trp412–Phe476 and Asn486–Ser548. 2 positions are modified to phosphoserine: Ser548 and Ser558. The region spanning Asp560–Pro703 is the TIR domain. NAD(+) contacts are provided by residues Arg569 to Arg570 and Glu599. The active site involves Glu642. The span at Pro703–Gly717 shows a compositional bias: polar residues. Residues Pro703 to Pro724 form a disordered region.

This sequence belongs to the SARM1 family. In terms of assembly, homooctamer; forms an octameric ring via SAM domains. Interacts with TICAM1/TRIF and thereby interferes with TICAM1/TRIF function. Interacts with MAPK10/JNK3 and SDC2 (via cytoplasmic domain). Post-translationally, phosphorylation at Ser-548 by JNK kinases (MAPK8, MAPK9 and /or MAPK10) enhance the NAD(+) hydrolase (NADase) activity. Phosphorylation at Ser-548 and subsequent activation takes place in response to oxidative stress conditions and inhibits mitochondrial respiration. Phosphorylation at Ser-548 increases in response to cerebral ischemia/reperfusion (I/R) injury.

Its subcellular location is the cytoplasm. The protein resides in the cell projection. It localises to the axon. The protein localises to the dendrite. It is found in the synapse. Its subcellular location is the mitochondrion. It carries out the reaction NAD(+) + H2O = ADP-D-ribose + nicotinamide + H(+). It catalyses the reaction NAD(+) = cyclic ADP-beta-D-ribose + nicotinamide + H(+). The catalysed reaction is NADP(+) + H2O = ADP-D-ribose 2'-phosphate + nicotinamide + H(+). Autoinhibited: in the inactive state, the enzymatic TIR domain is held apart by the autoinhibiting ARM repeats. NAD(+)-binding to ARM repeats maintains an inactive state by promoting interaction between ARM repeats and the TIR domain, thereby facilitating inhibition of the enzymatic TIR domain. Following activation, possibly by nicotinamide mononucleotide (NMN), auto-inhibitory interactions are released, allowing self-association of the TIR domains and subsequent activation of the NAD(+) hydrolase (NADase) activity. Self-association of TIR domains is facilitated by the octamer of SAM domains. Its function is as follows. NAD(+) hydrolase, which plays a key role in axonal degeneration following injury by regulating NAD(+) metabolism. Acts as a negative regulator of MYD88- and TRIF-dependent toll-like receptor signaling pathway by promoting Wallerian degeneration, an injury-induced form of programmed subcellular death which involves degeneration of an axon distal to the injury site. Wallerian degeneration is triggered by NAD(+) depletion: in response to injury, SARM1 is activated and catalyzes cleavage of NAD(+) into ADP-D-ribose (ADPR), cyclic ADPR (cADPR) and nicotinamide; NAD(+) cleavage promoting cytoskeletal degradation and axon destruction. Also able to hydrolyze NADP(+), but not other NAD(+)-related molecules. Can activate neuronal cell death in response to stress. Regulates dendritic arborization through the MAPK4-JNK pathway. Involved in innate immune response: inhibits both TICAM1/TRIF- and MYD88-dependent activation of JUN/AP-1, TRIF-dependent activation of NF-kappa-B and IRF3, and the phosphorylation of MAPK14/p38. The polypeptide is NAD(+) hydrolase SARM1 (Rattus norvegicus (Rat)).